A 372-amino-acid polypeptide reads, in one-letter code: F-box/kelch-repeat protein At2g44630 (372 aa).

Residues 1-13 show a composition bias toward polar residues; it reads MSNADEPPQKTNQ. The segment at 1-21 is disordered; it reads MSNADEPPQKTNQPPSSSLTP. One can recognise an F-box domain in the interval 21–67; sequence PPSLFSLPVDIVLNILALVPKRYYPILCCVSKSLRSLIRSPEIHKTR. Kelch repeat units lie at residues 136-181 and 183-228; these read EIYC…LVGG and IYVI…SVSL.

The protein is F-box/kelch-repeat protein At2g44630 of Arabidopsis thaliana (Mouse-ear cress).